Consider the following 110-residue polypeptide: Thiosulfate sulfurtransferase GlpE (110 aa).

A Rhodanese domain is found at 17-105; the sequence is RENGAQVVDI…WRSVYPADTS (89 aa). Cys-65 functions as the Cysteine persulfide intermediate in the catalytic mechanism.

Belongs to the GlpE family.

The protein resides in the cytoplasm. It carries out the reaction thiosulfate + hydrogen cyanide = thiocyanate + sulfite + 2 H(+). The catalysed reaction is thiosulfate + [thioredoxin]-dithiol = [thioredoxin]-disulfide + hydrogen sulfide + sulfite + 2 H(+). Functionally, transferase that catalyzes the transfer of sulfur from thiosulfate to thiophilic acceptors such as cyanide or dithiols. May function in a CysM-independent thiosulfate assimilation pathway by catalyzing the conversion of thiosulfate to sulfite, which can then be used for L-cysteine biosynthesis. This Pseudomonas paraeruginosa (strain DSM 24068 / PA7) (Pseudomonas aeruginosa (strain PA7)) protein is Thiosulfate sulfurtransferase GlpE.